Reading from the N-terminus, the 583-residue chain is Zinc finger protein 277 (583 aa).

C2H2-type zinc fingers lie at residues 351-375 (LQCL…KKQH) and 482-508 (HQCK…DTKH).

Belongs to the ZNF277 family. In terms of assembly, interacts (via zinc-finger domains) with RPS2/40S ribosomal protein S2, perhaps as nascent RPS2 is synthesized during translation; the interaction is direct; the interaction is extra-ribosomal. Interaction with RPS2 competes with the binding of RPS2 to protein arginine methyltransferase PRMT3. Interacts with Polycomb group (PcG) complex protein BMI1. May be part of a complex including at least ZNF277, BMI1 and RNF2/RING2.

The protein resides in the nucleus. It localises to the cytoplasm. Its subcellular location is the nucleolus. The protein localises to the chromosome. Functionally, probable transcription factor. Involved in modulation of cellular senescence; represses transcription of the tumor suppressor gene INK4A/ARF, perhaps acting via the Polycomb group (PcG) complex PRC1. The polypeptide is Zinc finger protein 277 (Mus musculus (Mouse)).